Reading from the N-terminus, the 377-residue chain is Alanine racemase (377 aa).

Lys-37 functions as the Proton acceptor; specific for D-alanine in the catalytic mechanism. Lys-37 carries the N6-(pyridoxal phosphate)lysine modification. Arg-135 provides a ligand contact to substrate. The active-site Proton acceptor; specific for L-alanine is Tyr-271. Residue Met-319 participates in substrate binding.

This sequence belongs to the alanine racemase family. Requires pyridoxal 5'-phosphate as cofactor.

The catalysed reaction is L-alanine = D-alanine. Its pathway is amino-acid biosynthesis; D-alanine biosynthesis; D-alanine from L-alanine: step 1/1. Catalyzes the interconversion of L-alanine and D-alanine. May also act on other amino acids. In Helicobacter pylori (strain G27), this protein is Alanine racemase (alr).